We begin with the raw amino-acid sequence, 298 residues long: Isochorismatase domain-containing protein 1 (298 aa).

Position 160 is a phosphotyrosine (Y160). K279 carries the post-translational modification N6-succinyllysine.

Belongs to the isochorismatase family.

This Bos taurus (Bovine) protein is Isochorismatase domain-containing protein 1 (ISOC1).